Here is a 312-residue protein sequence, read N- to C-terminus: Pantothenate kinase (312 aa).

Residue 97–104 (GSVAVGKS) participates in ATP binding.

Belongs to the prokaryotic pantothenate kinase family.

Its subcellular location is the cytoplasm. It catalyses the reaction (R)-pantothenate + ATP = (R)-4'-phosphopantothenate + ADP + H(+). The protein operates within cofactor biosynthesis; coenzyme A biosynthesis; CoA from (R)-pantothenate: step 1/5. This Mycobacterium bovis (strain BCG / Pasteur 1173P2) protein is Pantothenate kinase.